Here is a 71-residue protein sequence, read N- to C-terminus: Large ribosomal subunit protein eL38 (71 aa).

The protein belongs to the eukaryotic ribosomal protein eL38 family.

In Ixodes scapularis (Black-legged tick), this protein is Large ribosomal subunit protein eL38 (RpL38).